Consider the following 246-residue polypeptide: Probable chemoreceptor glutamine deamidase CheD (246 aa).

The segment at G225 to K246 is disordered.

This sequence belongs to the CheD family.

The enzyme catalyses L-glutaminyl-[protein] + H2O = L-glutamyl-[protein] + NH4(+). In terms of biological role, probably deamidates glutamine residues to glutamate on methyl-accepting chemotaxis receptors (MCPs), playing an important role in chemotaxis. In Burkholderia vietnamiensis (strain G4 / LMG 22486) (Burkholderia cepacia (strain R1808)), this protein is Probable chemoreceptor glutamine deamidase CheD.